Consider the following 442-residue polypeptide: Radical S-adenosyl methionine domain-containing protein 1, mitochondrial (442 aa).

The N-terminal 22 residues, 1 to 22 (MALPRSQARGWVKAAKMAQRRR), are a transit peptide targeting the mitochondrion. Residues 1–37 (MALPRSQARGWVKAAKMAQRRRPADDTGGPQSPAPGS) are disordered. Residues 34–270 (APGSQRAALY…RAVLREAGFR (237 aa)) enclose the Radical SAM core domain. Tyrosine 43 lines the S-adenosyl-L-methionine pocket. Positions 49, 53, and 56 each coordinate [4Fe-4S] cluster. Residues glycine 98, 99-100 (GT), glutamate 131, glutamine 158, arginine 170, and aspartate 195 each bind S-adenosyl-L-methionine.

The protein belongs to the anaerobic coproporphyrinogen-III oxidase family. HemW subfamily. [4Fe-4S] cluster is required as a cofactor.

Its subcellular location is the mitochondrion. In terms of biological role, may be a heme chaperone, appears to bind heme. Homologous bacterial proteins do not have oxygen-independent coproporphyrinogen-III oxidase activity. Binds 1 [4Fe-4S] cluster. The cluster is coordinated with 3 cysteines and an exchangeable S-adenosyl-L-methionine. The chain is Radical S-adenosyl methionine domain-containing protein 1, mitochondrial (RSAD1) from Bos taurus (Bovine).